Here is a 99-residue protein sequence, read N- to C-terminus: Protein Tat (99 aa).

The tract at residues 1-24 (MDPVDPKLEPWNHPGSQPQTACNN) is interaction with human CREBBP. Positions 1–48 (MDPVDPKLEPWNHPGSQPQTACNNCYCKKCCYHCQMCFLKKGLGISYG) are transactivation. Residues Cys-22, Cys-25, and Cys-27 each contribute to the Zn(2+) site. The segment at 22-37 (CNNCYCKKCCYHCQMC) is cysteine-rich. Residue Lys-28 is modified to N6-acetyllysine; by host PCAF. Zn(2+)-binding residues include Cys-30, His-33, Cys-34, and Cys-37. Residues 38–48 (FLKKGLGISYG) form a core region. A compositionally biased stretch (basic residues) spans 48 to 58 (GRKKRSQRHRT). The tract at residues 48–99 (GRKKRSQRHRTPASLQDHQNSISKQPLSRTHGDPTGPKEQKKEVASKTETDP) is disordered. The Nuclear localization signal, RNA-binding (TAR), and protein transduction signature appears at 49 to 57 (RKKRSQRHR). An interaction with the host capping enzyme RNGTT region spans residues 49–86 (RKKRSQRHRTPASLQDHQNSISKQPLSRTHGDPTGPKE). N6-acetyllysine; by host EP300 and GCN5L2 is present on residues Lys-50 and Lys-51. Arg-52 is modified (asymmetric dimethylarginine; by host PRMT6). The span at 60–75 (ASLQDHQNSISKQPLS) shows a compositional bias: polar residues. Lys-71 participates in a covalent cross-link: Glycyl lysine isopeptide (Lys-Gly) (interchain with G-Cter in ubiquitin). Basic and acidic residues predominate over residues 77–99 (THGDPTGPKEQKKEVASKTETDP).

It belongs to the lentiviruses Tat family. As to quaternary structure, interacts with host CCNT1. Associates with the P-TEFb complex composed at least of Tat, P-TEFb (CDK9 and CCNT1), TAR RNA, RNA Pol II. Recruits the HATs CREBBP, TAF1/TFIID, EP300, PCAF and GCN5L2. Interacts with host KAT5/Tip60; this interaction targets the latter to degradation. Interacts with the host deacetylase SIRT1. Interacts with host capping enzyme RNGTT; this interaction stimulates RNGTT. Binds to host KDR, and to the host integrins ITGAV/ITGB3 and ITGA5/ITGB1. Interacts with host KPNB1/importin beta-1 without previous binding to KPNA1/importin alpha-1. Interacts with EIF2AK2. Interacts with host nucleosome assembly protein NAP1L1; this interaction may be required for the transport of Tat within the nucleus, since the two proteins interact at the nuclear rim. Interacts with host C1QBP/SF2P32; this interaction involves lysine-acetylated Tat. Interacts with the host chemokine receptors CCR2, CCR3 and CXCR4. Interacts with host DPP4/CD26; this interaction may trigger an anti-proliferative effect. Interacts with host LDLR. Interacts with the host extracellular matrix metalloproteinase MMP1. Interacts with host PRMT6; this interaction mediates Tat's methylation. Interacts with, and is ubiquitinated by MDM2/Hdm2. Interacts with host PSMC3 and HTATIP2. Interacts with STAB1; this interaction may overcome SATB1-mediated repression of IL2 and IL2RA (interleukin) in T cells by binding to the same domain than HDAC1. Interacts (when acetylated) with human CDK13, thereby increasing HIV-1 mRNA splicing and promoting the production of the doubly spliced HIV-1 protein Nef. Interacts with host TBP; this interaction modulates the activity of transcriptional pre-initiation complex. Interacts with host RELA. Interacts with host PLSCR1; this interaction negatively regulates Tat transactivation activity by altering its subcellular distribution. In terms of processing, asymmetrical arginine methylation by host PRMT6 seems to diminish the transactivation capacity of Tat and affects the interaction with host CCNT1. Acetylation by EP300, CREBBP, GCN5L2/GCN5 and PCAF regulates the transactivation activity of Tat. EP300-mediated acetylation of Lys-50 promotes dissociation of Tat from the TAR RNA through the competitive binding to PCAF's bromodomain. In addition, the non-acetylated Tat's N-terminus can also interact with PCAF. PCAF-mediated acetylation of Lys-28 enhances Tat's binding to CCNT1. Lys-50 is deacetylated by SIRT1. Post-translationally, polyubiquitination by host MDM2 does not target Tat to degradation, but activates its transactivation function and fosters interaction with CCNT1 and TAR RNA. In terms of processing, phosphorylated by EIF2AK2 on serine and threonine residues adjacent to the basic region important for TAR RNA binding and function. Phosphorylation of Tat by EIF2AK2 is dependent on the prior activation of EIF2AK2 by dsRNA.

The protein resides in the host nucleus. It localises to the host nucleolus. Its subcellular location is the host cytoplasm. The protein localises to the secreted. In terms of biological role, transcriptional activator that increases RNA Pol II processivity, thereby increasing the level of full-length viral transcripts. Recognizes a hairpin structure at the 5'-LTR of the nascent viral mRNAs referred to as the transactivation responsive RNA element (TAR) and recruits the cyclin T1-CDK9 complex (P-TEFb complex) that will in turn hyperphosphorylate the RNA polymerase II to allow efficient elongation. The CDK9 component of P-TEFb and other Tat-activated kinases hyperphosphorylate the C-terminus of RNA Pol II that becomes stabilized and much more processive. Other factors such as HTATSF1/Tat-SF1, SUPT5H/SPT5, and HTATIP2 are also important for Tat's function. Besides its effect on RNA Pol II processivity, Tat induces chromatin remodeling of proviral genes by recruiting the histone acetyltransferases (HATs) CREBBP, EP300 and PCAF to the chromatin. This also contributes to the increase in proviral transcription rate, especially when the provirus integrates in transcriptionally silent region of the host genome. To ensure maximal activation of the LTR, Tat mediates nuclear translocation of NF-kappa-B by interacting with host RELA. Through its interaction with host TBP, Tat may also modulate transcription initiation. Tat can reactivate a latently infected cell by penetrating in it and transactivating its LTR promoter. In the cytoplasm, Tat is thought to act as a translational activator of HIV-1 mRNAs. Extracellular circulating Tat can be endocytosed by surrounding uninfected cells via the binding to several surface receptors such as CD26, CXCR4, heparan sulfate proteoglycans (HSPG) or LDLR. Neurons are rarely infected, but they internalize Tat via their LDLR. Through its interaction with nuclear HATs, Tat is potentially able to control the acetylation-dependent cellular gene expression. Modulates the expression of many cellular genes involved in cell survival, proliferation or in coding for cytokines or cytokine receptors. Tat plays a role in T-cell and neurons apoptosis. Tat induced neurotoxicity and apoptosis probably contribute to neuroAIDS. Circulating Tat also acts as a chemokine-like and/or growth factor-like molecule that binds to specific receptors on the surface of the cells, affecting many cellular pathways. In the vascular system, Tat binds to ITGAV/ITGB3 and ITGA5/ITGB1 integrins dimers at the surface of endothelial cells and competes with bFGF for heparin-binding sites, leading to an excess of soluble bFGF. The protein is Protein Tat of Homo sapiens (Human).